A 180-amino-acid chain; its full sequence is Large ribosomal subunit protein eL20 (180 aa).

Belongs to the eukaryotic ribosomal protein eL20 family.

This Caenorhabditis elegans protein is Large ribosomal subunit protein eL20.